A 227-amino-acid chain; its full sequence is Basic leucine zipper 24 (227 aa).

The interval 44–68 is disordered; that stretch reads EDKDQDRVTRGCSHTHSCNPPGPED. The bZIP domain maps to 94–160; the sequence is DSSNKKRLCG…IRLRALLVEM (67 aa). The tract at residues 98–118 is basic motif; the sequence is KKRLCGNREAVRKYREKKKAR. The leucine-zipper stretch occupies residues 122-129; sequence LEDEVMRL.

As to quaternary structure, homodimer. As to expression, expressed in young leaves and cauline leaves.

It is found in the nucleus. The protein resides in the cytoplasm. Functionally, transcription factor involved in the regulation of salt stress response. Functions as a negative transcriptional regulator of salt stress acclimation response by regulating cation homeostasis. Negatively regulates the expression of genes contributing to ion and osmotic homeostasis during salt stress, such as the Na(+) transporter HKT1, the Na(+)/H(+) antiporter SOS1, the aquaporin PIP2-1 and the glutamine synthetase GLN1-3. In addition, targets genes with functions in plant growth and development, such as argonaute 4 (AGO4) and cyclophilin 19 (CYP19). The sequence is that of Basic leucine zipper 24 from Arabidopsis thaliana (Mouse-ear cress).